The chain runs to 444 residues: 23S rRNA (uracil(1939)-C(5))-methyltransferase RlmD (444 aa).

One can recognise a TRAM domain in the interval 5–67 (RNRFDRTPFQ…RHFDEAKTVE (63 aa)). Residues cysteine 80, cysteine 86, cysteine 89, and cysteine 168 each coordinate [4Fe-4S] cluster. Residues glutamine 276, phenylalanine 305, asparagine 310, glutamate 326, aspartate 353, and aspartate 374 each coordinate S-adenosyl-L-methionine. Cysteine 400 serves as the catalytic Nucleophile.

Belongs to the class I-like SAM-binding methyltransferase superfamily. RNA M5U methyltransferase family. RlmD subfamily.

It carries out the reaction uridine(1939) in 23S rRNA + S-adenosyl-L-methionine = 5-methyluridine(1939) in 23S rRNA + S-adenosyl-L-homocysteine + H(+). In terms of biological role, catalyzes the formation of 5-methyl-uridine at position 1939 (m5U1939) in 23S rRNA. The sequence is that of 23S rRNA (uracil(1939)-C(5))-methyltransferase RlmD from Xanthomonas oryzae pv. oryzae (strain MAFF 311018).